The sequence spans 343 residues: Dihydroorotase (343 aa).

Residues His-14 and His-16 each contribute to the Zn(2+) site. Residues His-16–Arg-18 and Asn-42 each bind substrate. Zn(2+)-binding residues include Lys-100, His-137, and His-175. At Lys-100 the chain carries N6-carboxylysine. His-137 is a substrate binding site. A substrate-binding site is contributed by Leu-220. Asp-248 is a binding site for Zn(2+). Residue Asp-248 is part of the active site. The substrate site is built by His-252 and Ala-264.

It belongs to the metallo-dependent hydrolases superfamily. DHOase family. Class II DHOase subfamily. In terms of assembly, homodimer. Zn(2+) serves as cofactor.

The catalysed reaction is (S)-dihydroorotate + H2O = N-carbamoyl-L-aspartate + H(+). Its pathway is pyrimidine metabolism; UMP biosynthesis via de novo pathway; (S)-dihydroorotate from bicarbonate: step 3/3. Its function is as follows. Catalyzes the reversible cyclization of carbamoyl aspartate to dihydroorotate. The protein is Dihydroorotase of Parasynechococcus marenigrum (strain WH8102).